Here is a 359-residue protein sequence, read N- to C-terminus: 3-dehydroquinate synthase (359 aa).

NAD(+) is bound by residues 71–76 (DGEAYK), 105–109 (GVIGD), 129–130 (TT), K142, K151, and 169–172 (TLGT). Zn(2+) is bound by residues E184, H247, and H264.

Belongs to the sugar phosphate cyclases superfamily. Dehydroquinate synthase family. The cofactor is Co(2+). Requires Zn(2+) as cofactor. NAD(+) serves as cofactor.

It localises to the cytoplasm. It catalyses the reaction 7-phospho-2-dehydro-3-deoxy-D-arabino-heptonate = 3-dehydroquinate + phosphate. The protein operates within metabolic intermediate biosynthesis; chorismate biosynthesis; chorismate from D-erythrose 4-phosphate and phosphoenolpyruvate: step 2/7. Catalyzes the conversion of 3-deoxy-D-arabino-heptulosonate 7-phosphate (DAHP) to dehydroquinate (DHQ). The polypeptide is 3-dehydroquinate synthase (Thiobacillus denitrificans (strain ATCC 25259 / T1)).